We begin with the raw amino-acid sequence, 331 residues long: Phosphate acyltransferase (331 aa).

This sequence belongs to the PlsX family. Homodimer. Probably interacts with PlsY.

It localises to the cytoplasm. The catalysed reaction is a fatty acyl-[ACP] + phosphate = an acyl phosphate + holo-[ACP]. The protein operates within lipid metabolism; phospholipid metabolism. Catalyzes the reversible formation of acyl-phosphate (acyl-PO(4)) from acyl-[acyl-carrier-protein] (acyl-ACP). This enzyme utilizes acyl-ACP as fatty acyl donor, but not acyl-CoA. This is Phosphate acyltransferase from Chlorobaculum tepidum (strain ATCC 49652 / DSM 12025 / NBRC 103806 / TLS) (Chlorobium tepidum).